A 217-amino-acid chain; its full sequence is MTYIVALTGGISSGKTTISNGFKKIGINVIDTDIIAKNIIEKNLQVSFSIKRKFGKKILNIDNSINRLLLRQYVFNNHHHRLWLENLLHPKIYQESKHQIKMTQSNWCLWVVPLLVEKKLEKKAHRILLIDTPVKEQIKRTVRRDKISFLEAKKIIALQSSRKTRISLSDDIIFNKKNFKKINLYIYYFNLLYSHLSRIYNKNKTINIKKNFLTKFY.

Residues 4-203 (IVALTGGISS…SHLSRIYNKN (200 aa)) enclose the DPCK domain. 12–17 (SSGKTT) provides a ligand contact to ATP.

It belongs to the CoaE family.

It is found in the cytoplasm. It carries out the reaction 3'-dephospho-CoA + ATP = ADP + CoA + H(+). It participates in cofactor biosynthesis; coenzyme A biosynthesis; CoA from (R)-pantothenate: step 5/5. Catalyzes the phosphorylation of the 3'-hydroxyl group of dephosphocoenzyme A to form coenzyme A. The sequence is that of Dephospho-CoA kinase from Buchnera aphidicola subsp. Acyrthosiphon pisum (strain APS) (Acyrthosiphon pisum symbiotic bacterium).